The primary structure comprises 355 residues: (3aS,4S,5R,7aS)-5-hydroxy-7a-methyl-1-oxo-octahydro-1H-indene-4-carboxyl-CoA dehydrogenase (355 aa).

Residues 21-23, 173-175, and 196-197 contribute to the FMN site; these read GMG, AGG, and GT.

Belongs to the nitronate monooxygenase family.

It catalyses the reaction (3aS,4S,5R,7aS)-5-hydroxy-7a-methyl-1-oxo-octahydro-1H-indene-4-carboxyl-CoA + NAD(+) = (5R,7aS)-5-hydroxy-7a-methyl-1-oxo-2,3,5,6,7,7a-hexahydro-1H-indene-carboxyl-CoA + NADH + H(+). Its pathway is steroid metabolism; cholesterol degradation. With respect to regulation, requires the presence of IpdF. Involved in the final steps of cholesterol and steroid degradation. Probably catalyzes the introduction of a double bound into the C ring of 5OH-HIC-CoA, leading to the formation of (5R,7aS)-5-hydroxy-7a-methyl-1-oxo-3,5,6,7-tetrahydro-2H-indene-4-carboxyl-CoA. This is (3aS,4S,5R,7aS)-5-hydroxy-7a-methyl-1-oxo-octahydro-1H-indene-4-carboxyl-CoA dehydrogenase from Mycobacterium tuberculosis (strain ATCC 25618 / H37Rv).